We begin with the raw amino-acid sequence, 416 residues long: Actin-like protein 9 (416 aa).

The tract at residues 1–40 (MDASRPKSSESQSSLEAPRPGPNPSPNVVNKPLQRDSPGM) is disordered.

It belongs to the actin family. Interacts with ACTL7A. As to expression, testis-specific.

The protein resides in the cytoplasmic vesicle. The protein localises to the secretory vesicle. It localises to the acrosome. It is found in the cytoplasm. Its subcellular location is the cytoskeleton. The protein resides in the perinuclear theca. Testis-specic protein that plays an important role in fusion of proacrosomal vesicles and perinuclear theca formation. In Homo sapiens (Human), this protein is Actin-like protein 9.